The primary structure comprises 873 residues: Leucine--tRNA ligase (873 aa).

Positions 42-52 (PYPSGKLHMGH) match the 'HIGH' region motif. Residues 628–632 (KMAKS) carry the 'KMSKS' region motif. Residue K631 coordinates ATP.

Belongs to the class-I aminoacyl-tRNA synthetase family.

It is found in the cytoplasm. It catalyses the reaction tRNA(Leu) + L-leucine + ATP = L-leucyl-tRNA(Leu) + AMP + diphosphate. This Aromatoleum aromaticum (strain DSM 19018 / LMG 30748 / EbN1) (Azoarcus sp. (strain EbN1)) protein is Leucine--tRNA ligase.